Here is a 602-residue protein sequence, read N- to C-terminus: Multicopper oxidase aurL2 (602 aa).

Residues 1 to 17 (MLFRFLALLPFVAGAFA) form the signal peptide. Plastocyanin-like domains follow at residues 38-149 (DIKI…VRDA) and 160-317 (IPLL…KYRC). 2 N-linked (GlcNAc...) asparagine glycosylation sites follow: Asn52 and Asn80. Cu cation-binding residues include His84, His86, His130, and His132. 7 N-linked (GlcNAc...) asparagine glycosylation sites follow: Asn201, Asn247, Asn337, Asn383, Asn387, Asn419, and Asn424. A Plastocyanin-like 3 domain is found at 421–556 (TTPNYTLALE…QVMGMATVWV (136 aa)). His469 lines the Cu cation pocket. N-linked (GlcNAc...) asparagine glycosylation is found at Asn482 and Asn486.

Belongs to the multicopper oxidase family.

Its pathway is pigment biosynthesis. Functionally, multicopper oxidase; part of the gene cluster that mediates the biosynthesis of aurofusarin, a red mycelium pigment which is acting as a mycotoxin. The first step is performed by the polyketide synthase which condenses one acetyl-CoA and 6 malonyl-CoA units to form the first intermediate, the cyclic heptaketide and yellow pigment YWA1. The C2 hydroxyl group in the pyrone ring of YWA1 is probably formed during ring closure by an aldol-type cyclization reaction. The dehydratase aurZ then acts as the first tailoring enzyme in the aurofusarin biosynthetic pathway by converting YWA1 to nor-rubrofusarin. Nor-rubrofusarin is then methylated to rubrofusarin by the O-methyltransferase aurJ. Rubrofusarin is then transported across the plasma membrane by the rubrofusarin-specific pump aurT for further enzymatic processing by the extracellular complex composed of GIP1, aurF, aurO and aurS to yield aurofusarin. In Gibberella zeae (strain ATCC MYA-4620 / CBS 123657 / FGSC 9075 / NRRL 31084 / PH-1) (Wheat head blight fungus), this protein is Multicopper oxidase aurL2 (aurL2).